The following is a 616-amino-acid chain: Replication protein A 70 kDa DNA-binding subunit (616 aa).

Residue Met1 is modified to N-acetylmethionine. Residues Lys22 and Lys88 each participate in a glycyl lysine isopeptide (Lys-Gly) (interchain with G-Cter in ubiquitin) cross-link. The interval 121-155 is disordered; it reads GLGQPQVAPPAPAASPAASSRPQPQNGTSGAGSTV. Residues 134-145 show a composition bias toward low complexity; that stretch reads ASPAASSRPQPQ. Residues 146 to 155 are compositionally biased toward polar residues; sequence NGTSGAGSTV. Lys163 and Lys167 each carry N6-acetyllysine; alternate. Glycyl lysine isopeptide (Lys-Gly) (interchain with G-Cter in ubiquitin); alternate cross-links involve residues Lys163 and Lys167. Thr180 is subject to Phosphothreonine. Lys183 participates in a covalent cross-link: Glycyl lysine isopeptide (Lys-Gly) (interchain with G-Cter in ubiquitin). Thr191 is modified (phosphothreonine). The segment at residues 197-281 is a DNA-binding region (OB); it reads WTICARVTNK…VKNDYEMTFN (85 aa). Residues Lys220 and Lys244 each participate in a glycyl lysine isopeptide (Lys-Gly) (interchain with G-Cter in ubiquitin) cross-link. Lys259 bears the N6-acetyllysine; alternate mark. A Glycyl lysine isopeptide (Lys-Gly) (interchain with G-Cter in ubiquitin); alternate cross-link involves residue Lys259. Residues Lys267 and Lys331 each participate in a glycyl lysine isopeptide (Lys-Gly) (interchain with G-Cter in ubiquitin) cross-link. Ser384 carries the post-translational modification Phosphoserine. Glycyl lysine isopeptide (Lys-Gly) (interchain with G-Cter in ubiquitin) cross-links involve residues Lys410 and Lys431. Residue Lys449 forms a Glycyl lysine isopeptide (Lys-Gly) (interchain with G-Cter in SUMO) linkage. Residue Lys458 forms a Glycyl lysine isopeptide (Lys-Gly) (interchain with G-Cter in ubiquitin) linkage. The C4-type zinc-finger motif lies at 481–503; sequence CPTQDCNKKVIDQQNGLYRCEKC. Lys553 participates in a covalent cross-link: Glycyl lysine isopeptide (Lys-Gly) (interchain with G-Cter in ubiquitin). Lys577 participates in a covalent cross-link: Glycyl lysine isopeptide (Lys-Gly) (interchain with G-Cter in SUMO).

This sequence belongs to the replication factor A protein 1 family. Component of the canonical replication protein A complex (RPA), a heterotrimer composed of RPA1, RPA2 and RPA3. The DNA-binding activity may reside exclusively on the RPA1 subunit. Interacts with PRPF19; the PRP19-CDC5L complex is recruited to the sites of DNA repair where it ubiquitinates the replication protein A complex (RPA). Interacts with RIPK1. Interacts with the polymerase alpha subunit POLA1/p180; this interaction stabilizes the replicative complex and reduces the misincorporation rate of DNA polymerase alpha by acting as a fidelity clamp. Interacts with RAD51 and SENP6 to regulate DNA repair. Interacts with HELB; this interaction promotes HELB recruitment to chromatin following DNA damage. Interacts with PRIMPOL; leading to recruit PRIMPOL on chromatin and stimulate its DNA primase activity. Interacts with XPA; the interaction is direct and associates XPA with the RPA complex. Interacts with ETAA1; the interaction is direct and promotes ETAA1 recruitment at stalled replication forks. Interacts with RPA1; this interaction associates HROB with the RPA complex. Interacts (when poly-ADP-ribosylated) with HTATSF1. In terms of processing, DNA damage-induced 'Lys-63'-linked polyubiquitination by PRPF19 mediates ATRIP recruitment to the RPA complex at sites of DNA damage and activation of ATR. Ubiquitinated by RFWD3 at stalled replication forks in response to DNA damage: ubiquitination by RFWD3 does not lead to degradation by the proteasome and promotes removal of the RPA complex from stalled replication forks, promoting homologous recombination. Post-translationally, sumoylated on lysine residues Lys-449 and Lys-577, with Lys-449 being the major site. Sumoylation promotes recruitment of RAD51 to the DNA damage foci to initiate DNA repair through homologous recombination. Desumoylated by SENP6. Poly-ADP-ribosylated by PARP1; promoting recruitment of HTATSF1.

The protein resides in the nucleus. The protein localises to the PML body. As part of the heterotrimeric replication protein A complex (RPA/RP-A), binds and stabilizes single-stranded DNA intermediates, that form during DNA replication or upon DNA stress. It prevents their reannealing and in parallel, recruits and activates different proteins and complexes involved in DNA metabolism. Thereby, it plays an essential role both in DNA replication and the cellular response to DNA damage. In the cellular response to DNA damage, the RPA complex controls DNA repair and DNA damage checkpoint activation. Through recruitment of ATRIP activates the ATR kinase a master regulator of the DNA damage response. It is required for the recruitment of the DNA double-strand break repair factors RAD51 and RAD52 to chromatin in response to DNA damage. Also recruits to sites of DNA damage proteins like XPA and XPG that are involved in nucleotide excision repair and is required for this mechanism of DNA repair. Also plays a role in base excision repair (BER) probably through interaction with UNG. Also recruits SMARCAL1/HARP, which is involved in replication fork restart, to sites of DNA damage. May also play a role in telomere maintenance. The polypeptide is Replication protein A 70 kDa DNA-binding subunit (RPA1) (Pongo abelii (Sumatran orangutan)).